We begin with the raw amino-acid sequence, 674 residues long: ATP-dependent DNA helicase Rep (674 aa).

Positions 1–280 (MRLNPGQQHA…IKLEQNYRSS (280 aa)) constitute a UvrD-like helicase ATP-binding domain. ATP contacts are provided by residues 22–29 (AGAGSGKT) and R278. The region spanning 281–562 (GRILKAANIL…QLMTLHASKG (282 aa)) is the UvrD-like helicase C-terminal domain.

The protein belongs to the helicase family. UvrD subfamily. Homodimer.

It carries out the reaction Couples ATP hydrolysis with the unwinding of duplex DNA by translocating in the 3'-5' direction.. The enzyme catalyses ATP + H2O = ADP + phosphate + H(+). Its function is as follows. Rep helicase is a single-stranded DNA-dependent ATPase involved in DNA replication; it can initiate unwinding at a nick in the DNA. It binds to the single-stranded DNA and acts in a progressive fashion along the DNA in the 3' to 5' direction. This chain is ATP-dependent DNA helicase Rep, found in Salmonella typhimurium (strain LT2 / SGSC1412 / ATCC 700720).